The chain runs to 339 residues: MSKPKVGINGFGRIGRLVLRAAVEKDTVDVVAVNDPFINIDYMVYMFKYDSTHGRFKGSVSAEGGKLIVTNGKTTHHISVHNSKDPAEIPWGVDGAEYVVESTGVFTTTDKASAHLKGGAKKVIISAPSADAPMFVMGVNNDMYDKANNHIISNASCTTNCLAPLAKVIHDKFGIIEGLMTTVHATTATQKTVDGPSGKLWRDGRGAGQNIIPASTGAAKAVGKVIPGLNGKLTGMANRVPTPDVSVVDLTCRLQKGATMDEIKAAVKEAANGPMKGILEYTEDQVVSTDFTGDTHSSIFDSLACISLNPNFVKLIAWYDNEYGYSNRVVDLISYIASR.

Residues 13–14 (RI), aspartate 35, and lysine 84 each bind NAD(+). Residues 156 to 158 (SCT), threonine 187, 216 to 217 (TG), and arginine 239 contribute to the D-glyceraldehyde 3-phosphate site. Cysteine 157 (nucleophile) is an active-site residue. Asparagine 321 is an NAD(+) binding site.

The protein belongs to the glyceraldehyde-3-phosphate dehydrogenase family. In terms of assembly, homotetramer.

It is found in the cytoplasm. The catalysed reaction is D-glyceraldehyde 3-phosphate + phosphate + NAD(+) = (2R)-3-phospho-glyceroyl phosphate + NADH + H(+). It functions in the pathway carbohydrate degradation; glycolysis; pyruvate from D-glyceraldehyde 3-phosphate: step 1/5. This is Glyceraldehyde-3-phosphate dehydrogenase (G3PD) from Brugia malayi (Filarial nematode worm).